A 330-amino-acid chain; its full sequence is GTPase Obg (330 aa).

An Obg domain is found at 1–159 (MHFIDEVKIY…MWIHLSLKLL (159 aa)). The OBG-type G domain maps to 160–327 (SDVGLVGLPN…IVKLALETIK (168 aa)). GTP-binding positions include 166–173 (GLPNAGKS), 191–195 (FTTLV), 212–215 (DIPG), 279–282 (NKCD), and 308–310 (STC). Ser173 and Thr193 together coordinate Mg(2+).

Belongs to the TRAFAC class OBG-HflX-like GTPase superfamily. OBG GTPase family. Monomer. It depends on Mg(2+) as a cofactor.

It is found in the cytoplasm. An essential GTPase which binds GTP, GDP and possibly (p)ppGpp with moderate affinity, with high nucleotide exchange rates and a fairly low GTP hydrolysis rate. Plays a role in control of the cell cycle, stress response, ribosome biogenesis and in those bacteria that undergo differentiation, in morphogenesis control. The polypeptide is GTPase Obg (Rickettsia rickettsii (strain Iowa)).